A 204-amino-acid chain; its full sequence is Holliday junction branch migration complex subunit RuvA (204 aa).

Residues 1–64 (MIGHLTGRLV…EDAHLLFGFS (64 aa)) are domain I. The domain II stretch occupies residues 65 to 143 (QKTDRTLFRE…GIQQEDFFIE (79 aa)). The segment at 144–155 (SQHLKQPEHALN) is flexible linker. A domain III region spans residues 156–204 (EQDIPASEAISALIALGYKAAEAEKLVKKISKPALSSEQLIREALKAAL).

It belongs to the RuvA family. As to quaternary structure, homotetramer. Forms an RuvA(8)-RuvB(12)-Holliday junction (HJ) complex. HJ DNA is sandwiched between 2 RuvA tetramers; dsDNA enters through RuvA and exits via RuvB. An RuvB hexamer assembles on each DNA strand where it exits the tetramer. Each RuvB hexamer is contacted by two RuvA subunits (via domain III) on 2 adjacent RuvB subunits; this complex drives branch migration. In the full resolvosome a probable DNA-RuvA(4)-RuvB(12)-RuvC(2) complex forms which resolves the HJ.

Its subcellular location is the cytoplasm. The RuvA-RuvB-RuvC complex processes Holliday junction (HJ) DNA during genetic recombination and DNA repair, while the RuvA-RuvB complex plays an important role in the rescue of blocked DNA replication forks via replication fork reversal (RFR). RuvA specifically binds to HJ cruciform DNA, conferring on it an open structure. The RuvB hexamer acts as an ATP-dependent pump, pulling dsDNA into and through the RuvAB complex. HJ branch migration allows RuvC to scan DNA until it finds its consensus sequence, where it cleaves and resolves the cruciform DNA. The polypeptide is Holliday junction branch migration complex subunit RuvA (Pasteurella multocida (strain Pm70)).